The chain runs to 278 residues: Thioredoxin-related transmembrane protein 1 (278 aa).

An N-terminal signal peptide occupies residues M1–G26. A Thioredoxin domain is found at R27–W132. The Extracellular segment spans residues R27–Y181. Catalysis depends on nucleophile residues C56 and C59. A disulfide bond links C56 and C59. Residues L182 to V202 form a helical membrane-spanning segment. At A203–S278 the chain is on the cytoplasmic side. S-palmitoyl cysteine attachment occurs at residues C205 and C207. Over residues Q217–F226 the composition is skewed to polar residues. A disordered region spans residues Q217–S278. The span at E235–D251 shows a compositional bias: acidic residues. Phosphoserine is present on residues S245 and S278.

As to quaternary structure, interacts with ATP2A2. Post-translationally, palmitoylated; palmitoylation is required for localization to mitochondria-associated endoplasmic reticulum membrane (MAM).

Its subcellular location is the endoplasmic reticulum membrane. The protein resides in the mitochondrion membrane. The protein localises to the secreted. The catalysed reaction is Catalyzes the rearrangement of -S-S- bonds in proteins.. Thiredoxin domain-containing protein that participates in various redox reactions through the reversible oxidation of its active center dithiol to a disulfide and catalyze dithiol-disulfide exchange reactions. Acts as a key inhibitor of the alternative triglyceride biosynthesis pathway by inhibiting the activity of TMEM68/DIESL at the endoplasmic reticulum, thereby restricting accumulation of triacylglycerol. The alternative triglyceride biosynthesis pathway mediates formation of triacylglycerol from diacylglycerol and membrane phospholipids. Acts as a protein disulfide isomerase by catalyzing formation or reduction of disulfide bonds. Specifically mediates formation of disulfide bonds of transmembrane proteins at the endoplasmic reticulum membrane. Involved in ER-associated degradation (ERAD) via its protein disulfide isomerase activity by acting on folding-defective polypeptides at the endoplasmic reticulum membrane. Acts as a negative regulator of platelet aggregation following secretion in the extracellular space. Acts as a regulator of endoplasmic reticulum-mitochondria contact sites via its ability to regulate redox signals. Regulates endoplasmic reticulum-mitochondria Ca(2+) flux. The chain is Thioredoxin-related transmembrane protein 1 from Mus musculus (Mouse).